A 785-amino-acid chain; its full sequence is Endonuclease MutS2 (785 aa).

335-342 (GPNTGGKT) is an ATP binding site. Residues 710–785 (LDLRGERYED…GNGVTIVEFK (76 aa)) form the Smr domain.

This sequence belongs to the DNA mismatch repair MutS family. MutS2 subfamily. As to quaternary structure, homodimer. Binds to stalled ribosomes, contacting rRNA.

Its function is as follows. Endonuclease that is involved in the suppression of homologous recombination and thus may have a key role in the control of bacterial genetic diversity. Functionally, acts as a ribosome collision sensor, splitting the ribosome into its 2 subunits. Detects stalled/collided 70S ribosomes which it binds and splits by an ATP-hydrolysis driven conformational change. Acts upstream of the ribosome quality control system (RQC), a ribosome-associated complex that mediates the extraction of incompletely synthesized nascent chains from stalled ribosomes and their subsequent degradation. Probably generates substrates for RQC. This chain is Endonuclease MutS2, found in Listeria welshimeri serovar 6b (strain ATCC 35897 / DSM 20650 / CCUG 15529 / CIP 8149 / NCTC 11857 / SLCC 5334 / V8).